The following is a 451-amino-acid chain: UPF0210 protein Asuc_1169 (451 aa).

This sequence belongs to the UPF0210 family. In terms of assembly, homodimer.

The chain is UPF0210 protein Asuc_1169 from Actinobacillus succinogenes (strain ATCC 55618 / DSM 22257 / CCUG 43843 / 130Z).